Here is a 95-residue protein sequence, read N- to C-terminus: Small ribosomal subunit protein bS6 (95 aa).

This sequence belongs to the bacterial ribosomal protein bS6 family.

In terms of biological role, binds together with bS18 to 16S ribosomal RNA. This Exiguobacterium sp. (strain ATCC BAA-1283 / AT1b) protein is Small ribosomal subunit protein bS6.